The sequence spans 557 residues: Dihydroxy-acid dehydratase (557 aa).

Asp-78 contacts Mg(2+). A [2Fe-2S] cluster-binding site is contributed by Cys-119. Positions 120 and 121 each coordinate Mg(2+). Residue Lys-121 is modified to N6-carboxylysine. Cys-191 is a [2Fe-2S] cluster binding site. Glu-442 lines the Mg(2+) pocket. Residue Ser-468 is the Proton acceptor of the active site.

Belongs to the IlvD/Edd family. In terms of assembly, homodimer. The cofactor is [2Fe-2S] cluster. It depends on Mg(2+) as a cofactor.

The enzyme catalyses (2R)-2,3-dihydroxy-3-methylbutanoate = 3-methyl-2-oxobutanoate + H2O. It catalyses the reaction (2R,3R)-2,3-dihydroxy-3-methylpentanoate = (S)-3-methyl-2-oxopentanoate + H2O. It functions in the pathway amino-acid biosynthesis; L-isoleucine biosynthesis; L-isoleucine from 2-oxobutanoate: step 3/4. The protein operates within amino-acid biosynthesis; L-valine biosynthesis; L-valine from pyruvate: step 3/4. In terms of biological role, functions in the biosynthesis of branched-chain amino acids. Catalyzes the dehydration of (2R,3R)-2,3-dihydroxy-3-methylpentanoate (2,3-dihydroxy-3-methylvalerate) into 2-oxo-3-methylpentanoate (2-oxo-3-methylvalerate) and of (2R)-2,3-dihydroxy-3-methylbutanoate (2,3-dihydroxyisovalerate) into 2-oxo-3-methylbutanoate (2-oxoisovalerate), the penultimate precursor to L-isoleucine and L-valine, respectively. This Lachnospira eligens (strain ATCC 27750 / DSM 3376 / VPI C15-48 / C15-B4) (Eubacterium eligens) protein is Dihydroxy-acid dehydratase.